The primary structure comprises 95 residues: MLKPLGDRVVLKFEAEKEQTVGGFVLAASHKEATKVGTVVAVSETGIRTITGDIVPPSVAVGDKVLVEYGSGLEVKDGDQELVICREADILAVLA.

The protein belongs to the GroES chaperonin family. Heptamer of 7 subunits arranged in a ring. Interacts with the chaperonin GroEL.

It localises to the cytoplasm. Its function is as follows. Together with the chaperonin GroEL, plays an essential role in assisting protein folding. The GroEL-GroES system forms a nano-cage that allows encapsulation of the non-native substrate proteins and provides a physical environment optimized to promote and accelerate protein folding. GroES binds to the apical surface of the GroEL ring, thereby capping the opening of the GroEL channel. The sequence is that of Co-chaperonin GroES from Streptococcus equi subsp. equi (strain 4047).